The primary structure comprises 406 residues: Tryptophan synthase beta chain (406 aa).

An N6-(pyridoxal phosphate)lysine modification is found at K99.

It belongs to the TrpB family. In terms of assembly, tetramer of two alpha and two beta chains. Pyridoxal 5'-phosphate is required as a cofactor.

The enzyme catalyses (1S,2R)-1-C-(indol-3-yl)glycerol 3-phosphate + L-serine = D-glyceraldehyde 3-phosphate + L-tryptophan + H2O. Its pathway is amino-acid biosynthesis; L-tryptophan biosynthesis; L-tryptophan from chorismate: step 5/5. In terms of biological role, the beta subunit is responsible for the synthesis of L-tryptophan from indole and L-serine. The chain is Tryptophan synthase beta chain from Brucella melitensis biotype 2 (strain ATCC 23457).